A 437-amino-acid polypeptide reads, in one-letter code: GTPase Obg (437 aa).

One can recognise an Obg domain in the interval 2–160; that stretch reads SMFLDTAKIS…RELQLELKIL (159 aa). The disordered stretch occupies residues 127–146; it reads GNIRFATPRNPAPEIAENGE. Residues 161-338 enclose the OBG-type G domain; it reads ADVGLVGFPS…LLEATAELLD (178 aa). GTP contacts are provided by residues 167 to 174, 192 to 196, 214 to 217, 284 to 287, and 319 to 321; these read GFPSVGKS, FTTIV, DLPG, NKMD, and SSL. Positions 174 and 194 each coordinate Mg(2+). The OCT domain occupies 359 to 437; that stretch reads GFNEEERPFE…IGNFEFEFVD (79 aa).

This sequence belongs to the TRAFAC class OBG-HflX-like GTPase superfamily. OBG GTPase family. As to quaternary structure, monomer. Mg(2+) serves as cofactor.

It is found in the cytoplasm. Functionally, an essential GTPase which binds GTP, GDP and possibly (p)ppGpp with moderate affinity, with high nucleotide exchange rates and a fairly low GTP hydrolysis rate. Plays a role in control of the cell cycle, stress response, ribosome biogenesis and in those bacteria that undergo differentiation, in morphogenesis control. The polypeptide is GTPase Obg (Streptococcus thermophilus (strain ATCC BAA-491 / LMD-9)).